A 372-amino-acid chain; its full sequence is 4-hydroxybenzoate polyprenyltransferase, mitochondrial (372 aa).

The N-terminal 42 residues, 1–42, are a transit peptide targeting the mitochondrion; that stretch reads MFIWQRKSILLGRSILGSGRVTVAGIIGSSRKRYTSSSSSSS. 7 consecutive transmembrane segments (helical) span residues 92–112, 114–134, 171–191, 193–213, 229–249, 298–318, and 352–372; these read PVGTWLLYLPCSWSILMGAMM, GATLSATAGMLGIFGVGALVM, ALVFLGAQTLVGMGVLSLLPA, CWWLGLASLPIVFTYPLFKRF, ALLGFPAMGVMSWPTMIPLYL, IALLAVAGLNSGLLWGPGFIG, and TGLYFTYALAVDYILRLFGFL.

This sequence belongs to the UbiA prenyltransferase family. Mg(2+) is required as a cofactor.

The protein localises to the mitochondrion inner membrane. It catalyses the reaction an all-trans-polyprenyl diphosphate + 4-hydroxybenzoate = a 4-hydroxy-3-(all-trans-polyprenyl)benzoate + diphosphate. It functions in the pathway cofactor biosynthesis; ubiquinone biosynthesis. Functionally, catalyzes the prenylation of para-hydroxybenzoate (PHB) with an all-trans polyprenyl group. Mediates the second step in the final reaction sequence of coenzyme Q (CoQ) biosynthesis, which is the condensation of the polyisoprenoid side chain with PHB, generating the first membrane-bound Q intermediate. The sequence is that of 4-hydroxybenzoate polyprenyltransferase, mitochondrial from Saccharomyces cerevisiae (strain ATCC 204508 / S288c) (Baker's yeast).